The chain runs to 698 residues: UV radiation resistance-associated protein (698 aa).

Positions 1–10 (MSSCASLGGP) are enriched in low complexity. The interval 1–21 (MSSCASLGGPVPLPPPGPSAA) is disordered. Positions 23-149 (TSGAPARALH…YLGQQIHARN (127 aa)) constitute a C2 domain. Residues 199 to 268 (HRAQCAIKQT…REVAFLHKQQ (70 aa)) form a sufficient for interaction with STX7; VTI1B AND STX8 region. A coiled-coil region spans residues 200–304 (RAQCAIKQTQ…LRKECTAKRE (105 aa)). Positions 269–441 (MALQDKGSAF…IAQLRYQHGL (173 aa)) are sufficient for interaction with VPS16, required for interaction with CEP63. The required for interaction with PRKDC, XRCC6 and XRCC5 stretch occupies residues 442–698 (GTPDLRQTLP…FRRPRRSSDK (257 aa)). Disordered regions lie at residues 477-551 (PKRQ…SSLD) and 565-586 (VDLGSSVSGDHGNSDSGQEQGE). Ser492 carries the post-translational modification Phosphoserine. A Phosphoserine; by MTOR modification is found at Ser497. A Phosphoserine modification is found at Ser507. Thr517 is modified (phosphothreonine). 5 positions are modified to phosphoserine: Ser521, Ser548, Ser549, Ser570, and Ser688.

In terms of assembly, component of the PI3K (PI3KC3/PI3K-III/class III phosphatidylinositol 3-kinase) complex II (PI3KC3-C2) in which the core composed of the catalytic subunit PIK3C3, the regulatory subunit PIK3R4 and BECN1 is associated with UVRAG; in the complex interacts directly with BECN1. PI3KC3-C2 can associate with further regulatory subunits such as RUBCN and probably SH3GLB1/Bif-1. Interacts with SH3GLB1; UVRAG bridges the interaction to BECN1 indicative for an association with the PI3K complex PI3KC3-C2. Interacts with RINT1. Associates with the NRZ complex under basal conditions and dissociates from it under autophagy conditions to associate with the PI3K complex; these complex associations seem to be mutually exclusive. Interacts with VPS16; VPS11; VPS18; VPS33 (VPS33A or VPS33B) and VPS39; indicative for an association with a class C Vps tethering complex (possibly the HOPS complex). Interacts with RAB7A; RAB7A competes with UVRAG for RUBCN binding. Interacts with STX7, VTI1B, STX8. Interacts with PRKDC, XRCC6 and XRCC5; indicative for an association with the DNA-dependent protein kinase complex DNA-PK. Interacts with CEP63. Directly interacts with FEZ1 and SCOC; the interaction with SCOC is reduced by amino acid starvation, but the complex is stabilized in the presence of FEZ1. Interacts with BECN1P1/BECN2. Interacts with SLAMF1. Interacts with RUBCNL/PACER; promoting targeting of UVRAG to autophagosome. Interacts with WNK1. Phosphorylated at Ser-497 by MTOR under basal conditions; increases the interaction with RUBCN implicated in inhibitory effect of RUBCN on PI3KC3 and decreases interaction with RAB7A, and VPS16 and VPS39 (indicative for a class C Vps complex, possibly the HOPS complex).

It is found in the late endosome. The protein localises to the lysosome. It localises to the cytoplasmic vesicle. Its subcellular location is the autophagosome. The protein resides in the early endosome. It is found in the endoplasmic reticulum. The protein localises to the midbody. It localises to the chromosome. Its subcellular location is the centromere. Versatile protein that is involved in regulation of different cellular pathways implicated in membrane trafficking. Involved in regulation of the COPI-dependent retrograde transport from Golgi and the endoplasmic reticulum by associating with the NRZ complex; the function is dependent on its binding to phosphatidylinositol 3-phosphate (PtdIns(3)P). During autophagy acts as a regulatory subunit of the alternative PI3K complex II (PI3KC3-C2) that mediates formation of phosphatidylinositol 3-phosphate and is believed to be involved in maturation of autophagosomes and endocytosis. Activates lipid kinase activity of PIK3C3. Involved in the regulation of degradative endocytic trafficking and cytokinesis, and in regulation of ATG9A transport from the Golgi to the autophagosome; the functions seems to implicate its association with PI3KC3-C2. Involved in maturation of autophagosomes and degradative endocytic trafficking independently of BECN1 but depending on its association with a class C Vps complex (possibly the HOPS complex); the association is also proposed to promote autophagosome recruitment and activation of Rab7 and endosome-endosome fusion events. Enhances class C Vps complex (possibly HOPS complex) association with a SNARE complex and promotes fusogenic SNARE complex formation during late endocytic membrane fusion. In case of negative-strand RNA virus infection is required for efficient virus entry, promotes endocytic transport of virions and is implicated in a VAMP8-specific fusogenic SNARE complex assembly. In terms of biological role, involved in maintaining chromosomal stability. Promotes DNA double-strand break (DSB) repair by association with DNA-dependent protein kinase complex DNA-PK and activating it in non-homologous end joining (NHEJ). Required for centrosome stability and proper chromosome segregation. This is UV radiation resistance-associated protein (Uvrag) from Mus musculus (Mouse).